We begin with the raw amino-acid sequence, 567 residues long: Interleukin-1 receptor-like 1 (567 aa).

Residues 1 to 26 (MIDRQRMGLWALAILTLPMYLTVTEG) form the signal peptide. Ig-like C2-type domains are found at residues 27 to 109 (SKSS…LNVT) and 120 to 203 (PDYL…VTAT). The Extracellular portion of the chain corresponds to 27-332 (SKSSWGLENE…LRRKQPIDHR (306 aa)). Cysteines 42 and 93 form a disulfide. N-linked (GlcNAc...) asparagine glycans are attached at residues Asn60, Asn101, Asn107, Asn146, Asn176, and Asn194. Disulfide bonds link Cys117-Cys157 and Cys139-Cys187. Positions 204–216 (RSFTVEEKGFSMF) are flexible linker. An Ig-like C2-type 3 domain is found at 217-324 (PVITNPPYNH…GMIRHTIRLR (108 aa)). Asn225, Asn259, and Asn278 each carry an N-linked (GlcNAc...) asparagine glycan. 2 disulfide bridges follow: Cys240–Cys308 and Cys243–Cys287. Residue Lys326 forms a Glycyl lysine isopeptide (Lys-Gly) (interchain with G-Cter in ubiquitin) linkage. Residues 333–355 (SIYYIVAGCSLLLMFINVLVIVL) form a helical membrane-spanning segment. The Cytoplasmic segment spans residues 356–567 (KVFWIEVALF…GKACLDLKHF (212 aa)). In terms of domain architecture, TIR spans 380-540 (KLYDAYIIYP…KFWKHVRYQM (161 aa)). At Ser442 the chain carries Phosphoserine; by GSK3-beta. Glu466 is a catalytic residue.

This sequence belongs to the interleukin-1 receptor family. Interacts with MYD88, IRAK1, IRAK4, and TRAF6. Bound to its ligand IL33, interacts with IL1RAP to form the minimal interleukin-33 signaling complex with a 1:1:1 stoichiometry. Interacts with KIT (bound to KITLG/SCF). A mast cell-specific KITLG/SCF-induced interleukin-33 signaling complex contains IL1RL1, IL1RAP, KIT and MYD88. Interacts with TMED1. In terms of processing, phosphorylated by GSK3B at Ser-442; leading to proteasomal degradation. Post-translationally, ubiquitinated at Lys-326 in a FBXL19-mediated manner; leading to proteasomal degradation. Ubiquitination by TRAF6 via 'Lys-27'-linked polyubiquitination and deubiquitination by USP38 serves as a critical regulatory mechanism for fine-tuning IL1RL1-mediated inflammatory response. In terms of tissue distribution, predominantly expressed in hematopoietic tissues, and in macrophage, erythroid, epithelial and fibroblast cell lines. Isoform A is expressed in brain astrocytes and microglia. Isoform B is expressed in brain endothelial cells.

It is found in the cell membrane. Its subcellular location is the secreted. The enzyme catalyses NAD(+) + H2O = ADP-D-ribose + nicotinamide + H(+). Receptor for interleukin-33 (IL-33) which plays crucial roles in innate and adaptive immunity, contributing to tissue homeostasis and responses to environmental stresses together with coreceptor IL1RAP. Its stimulation recruits MYD88, IRAK1, IRAK4, and TRAF6, followed by phosphorylation of MAPK3/ERK1 and/or MAPK1/ERK2, MAPK14, and MAPK8. Possibly involved in helper T-cell function. Upon tissue injury, induces UCP2-dependent mitochondrial rewiring that attenuates the generation of reactive oxygen species and preserves the integrity of Krebs cycle required for persistent production of itaconate and subsequent GATA3-dependent differentiation of inflammation-resolving alternatively activated macrophages. Its function is as follows. Inhibits IL-33 signaling. This is Interleukin-1 receptor-like 1 (Il1rl1) from Mus musculus (Mouse).